A 529-amino-acid chain; its full sequence is Transcription activator of gluconeogenesis ERT1 (529 aa).

The interval 1–31 is disordered; it reads MCTPDENDYKTSTDPDTSANTNHTLEKKKRK. The span at 14–23 shows a compositional bias: polar residues; sequence DPDTSANTNH. Residues 40 to 68 constitute a DNA-binding region (zn(2)-C6 fungal-type); it reads CVNCSRLHVSCEAKRPCLRCISKGLTATC. Residues 174-193 are compositionally biased toward low complexity; it reads SNSTIGNSSNNSPTGTNTSP. A disordered region spans residues 174-198; sequence SNSTIGNSSNNSPTGTNTSPEETEM. The region spanning 408–480 is the PAS domain; the sequence is TLLEYVKFIA…KTLSKVAYRD (73 aa).

Belongs to the ERT1/acuK family.

Its subcellular location is the cytoplasm. It localises to the nucleus. Its function is as follows. Transcription factor which regulates nonfermentable carbon utilization. Activator of gluconeogenetic genes like PCK1. Involved in restriction of Ty1 transposition. The polypeptide is Transcription activator of gluconeogenesis ERT1 (ERT1) (Saccharomyces cerevisiae (strain ATCC 204508 / S288c) (Baker's yeast)).